The chain runs to 54 residues: Large ribosomal subunit protein bL32c (54 aa).

Basic residues predominate over residues 1 to 20 (MAVPKKRVSKSKRDMRKTTW). Positions 1–54 (MAVPKKRVSKSKRDMRKTTWKNKASKEAKKALSLAKSVSTGKSKSKGFQIKSSN) are disordered. A compositionally biased stretch (low complexity) spans 31–42 (ALSLAKSVSTGK).

Belongs to the bacterial ribosomal protein bL32 family.

Its subcellular location is the plastid. It is found in the chloroplast. The sequence is that of Large ribosomal subunit protein bL32c from Chlorokybus atmophyticus (Soil alga).